The following is a 129-amino-acid chain: Flagellar assembly factor FliW 2 (129 aa).

Belongs to the FliW family. As to quaternary structure, interacts with translational regulator CsrA and flagellin(s).

It is found in the cytoplasm. Acts as an anti-CsrA protein, binds CsrA and prevents it from repressing translation of its target genes, one of which is flagellin. Binds to flagellin and participates in the assembly of the flagellum. The protein is Flagellar assembly factor FliW 2 of Helicobacter pylori (strain J99 / ATCC 700824) (Campylobacter pylori J99).